A 684-amino-acid chain; its full sequence is Actin-related protein 5 (684 aa).

Residues 262–469 (KEKSVIIQLP…ARQKQKQKAN (208 aa)) adopt a coiled-coil conformation. Disordered regions lie at residues 392-443 (KEKK…PEHY) and 481-500 (VNPTNHGNYGEKGEEVEDPE). Positions 402 to 443 (SMKDGRLAQKRKRDEEKEKEKEKEEERDRQEEESFLKDPEHY) are enriched in basic and acidic residues.

It belongs to the actin family. ARP5 subfamily. Component of the chromatin-remodeling Ino80 complex.

The protein resides in the nucleus. Functionally, proposed core component of the chromatin remodeling Ino80 complex which is involved in transcriptional regulation, DNA replication and probably DNA repair. The protein is Actin-related protein 5 (arpE) of Dictyostelium discoideum (Social amoeba).